We begin with the raw amino-acid sequence, 147 residues long: Large ribosomal subunit protein bL9 (147 aa).

This sequence belongs to the bacterial ribosomal protein bL9 family.

Functionally, binds to the 23S rRNA. The polypeptide is Large ribosomal subunit protein bL9 (Clostridium acetobutylicum (strain ATCC 824 / DSM 792 / JCM 1419 / IAM 19013 / LMG 5710 / NBRC 13948 / NRRL B-527 / VKM B-1787 / 2291 / W)).